An 89-amino-acid polypeptide reads, in one-letter code: Small ribosomal subunit protein uS14A (89 aa).

The protein belongs to the universal ribosomal protein uS14 family. Part of the 30S ribosomal subunit. Contacts proteins S3 and S10.

Its function is as follows. Binds 16S rRNA, required for the assembly of 30S particles and may also be responsible for determining the conformation of the 16S rRNA at the A site. The chain is Small ribosomal subunit protein uS14A from Staphylococcus saprophyticus subsp. saprophyticus (strain ATCC 15305 / DSM 20229 / NCIMB 8711 / NCTC 7292 / S-41).